Consider the following 656-residue polypeptide: Methylenetetrahydrofolate reductase (NADPH) (656 aa).

Positions 1 to 12 (MVNEARGNSSLN) are enriched in polar residues. Positions 1–44 (MVNEARGNSSLNPCLEGSASSGSESSKDSSRCSTPGLDPERHER) are disordered. Phosphoserine occurs at positions 9, 10, 18, 20, 21, 23, 25, 26, 29, and 30. A Phosphothreonine modification is found at Thr34. The active-site Proton donor/acceptor is Glu63. 63–68 (EFFPPR) lines the NAD(+) pocket. A Phosphotyrosine modification is found at Tyr90. Thr94 is subject to Phosphothreonine. 94–95 (TW) serves as a coordination point for NAD(+). 94 to 95 (TW) contacts FAD. Phosphoserine is present on Ser103. Residues His127, 157 to 159 (RGD), 174 to 175 (YA), Tyr197, 201 to 204 (HPEA), Asp210, and Lys217 each bind FAD. Residue Asp159 coordinates substrate. Residues Gln228, Tyr321, and Arg325 each coordinate substrate. Ser394 bears the Phosphoserine mark. Phosphothreonine is present on Thr451. Residues Asn456, 461 to 464 (AAET), 481 to 485 (TINSQ), Thr560, and Thr573 contribute to the S-adenosyl-L-methionine site.

Belongs to the methylenetetrahydrofolate reductase family. Homodimer. FAD serves as cofactor. Phosphorylation of an N-terminal serine-rich phosphorylation region increases sensitivity to S-adenosylmethionine and inhibition.

It catalyses the reaction (6S)-5-methyl-5,6,7,8-tetrahydrofolate + NADP(+) = (6R)-5,10-methylene-5,6,7,8-tetrahydrofolate + NADPH + H(+). The protein operates within one-carbon metabolism; tetrahydrofolate interconversion. Its activity is regulated as follows. Allosterically regulated by S-adenosylmethionine (SAM). In terms of biological role, catalyzes the conversion of 5,10-methylenetetrahydrofolate to 5-methyltetrahydrofolate, a cosubstrate for homocysteine remethylation to methionine. Represents a key regulatory connection between the folate and methionine cycles. This chain is Methylenetetrahydrofolate reductase (NADPH), found in Homo sapiens (Human).